We begin with the raw amino-acid sequence, 425 residues long: Glucan 1,3-beta-glucosidase (425 aa).

The signal sequence occupies residues 1–19 (MNLTLLLLALIFSPSLIFS). The active-site Proton donor is Glu219. Intrachain disulfides connect Cys301/Cys423 and Cys326/Cys352. Glu318 acts as the Nucleophile in catalysis.

This sequence belongs to the glycosyl hydrolase 5 (cellulase A) family.

It is found in the secreted. The enzyme catalyses Successive hydrolysis of beta-D-glucose units from the non-reducing ends of (1-&gt;3)-beta-D-glucans, releasing alpha-glucose.. Beta-glucanases participate in the metabolism of beta-glucan, the main structural component of the cell wall. It could also function biosynthetically as a transglycosylase. This chain is Glucan 1,3-beta-glucosidase, found in Schwanniomyces occidentalis (Yeast).